The chain runs to 319 residues: Cell division protein PomZ (319 aa).

61–68 (KGGTGKTS) is a binding site for ATP.

The protein belongs to the ParA family. In terms of assembly, interacts with FtsZ in pull-down experiments.

It is found in the cytoplasm. Its function is as follows. Spatial regulator of cell division that is involved in identifying the incipient division site, recruiting FtsZ to the division site and stabilizing the Z-ring. Binds ATP and GTP. The polypeptide is Cell division protein PomZ (Myxococcus xanthus (strain DK1622)).